The primary structure comprises 449 residues: Adenylosuccinate synthetase isozyme 1 B (449 aa).

GTP is bound by residues 34-40 and 62-64; these read GDEGKGK and GHT. Asp-35 serves as the catalytic Proton acceptor. Asp-35 and Gly-62 together coordinate Mg(2+). Asp-35 contributes to the substrate binding site. Residues 35 to 38, 60 to 63, Thr-155, Arg-169, Asn-248, Thr-263, and Arg-327 contribute to the IMP site; these read DEGK and NAGH. Catalysis depends on His-63, which acts as the Proton donor. Position 323-329 (323-329) interacts with substrate; that stretch reads VTTGRKR. GTP contacts are provided by residues Arg-329, 355 to 357, and 437 to 440; these read KLD and GVGK.

Belongs to the adenylosuccinate synthetase family. In terms of assembly, homodimer. Mg(2+) is required as a cofactor.

Its subcellular location is the cytoplasm. The catalysed reaction is IMP + L-aspartate + GTP = N(6)-(1,2-dicarboxyethyl)-AMP + GDP + phosphate + 2 H(+). Its pathway is purine metabolism; AMP biosynthesis via de novo pathway; AMP from IMP: step 1/2. Functionally, component of the purine nucleotide cycle (PNC), which interconverts IMP and AMP to regulate the nucleotide levels in various tissues, and which contributes to glycolysis and ammoniagenesis. Catalyzes the first committed step in the biosynthesis of AMP from IMP. The chain is Adenylosuccinate synthetase isozyme 1 B (adss1b) from Salmo salar (Atlantic salmon).